Here is a 340-residue protein sequence, read N- to C-terminus: Organic solute transporter subunit alpha (340 aa).

Residues 1–52 (MEPDRTQIRLDPRYTADLLEILKTNYSVPSACFSYPPTAAQLLRALGPVDIS) lie on the Extracellular side of the membrane. Asn-25 carries an N-linked (GlcNAc...) asparagine glycan. Residues 53 to 73 (LMVIMTLFVLGSIAIFLEAAV) form a helical membrane-spanning segment. The Cytoplasmic portion of the chain corresponds to 74-87 (YLHKNTRCPIKRKT). A helical membrane pass occupies residues 88-108 (LIWCSSSPTIVSAFSCFGLWI). Residues 109 to 110 (PR) are Extracellular-facing. Residues 111 to 131 (ALTLVEMAITTFYSMCFYLLM) form a helical membrane-spanning segment. Residues 132-186 (QAMVEGFGGKEAVLRTLKDTPVMIHTGPCCCCCPCCPRIKITRKRLQLLLLGPIQ) are Cytoplasmic-facing. Residues 187–207 (YAFFKISLTLVGLFLIPDGIF) traverse the membrane as a helical segment. At 208 to 219 (DPSDISEGSTAL) the chain is on the extracellular side. Residues 220 to 240 (WINTFLGVSTLSALWTIGIIF) traverse the membrane as a helical segment. At 241–255 (RQARLHLGEQNIGAK) the chain is on the cytoplasmic side. The chain crosses the membrane as a helical span at residues 256–276 (FVLFQALLILSALQPSIFSVL). The Extracellular portion of the chain corresponds to 277 to 295 (ASGGQIACSPPFSSKIRSQ). A helical membrane pass occupies residues 296–316 (VMNCHLLILESFLITVLTRIY). Residues 317–340 (YRRKDDKLGYEPFSSPDQDLNLKA) lie on the Cytoplasmic side of the membrane. Phosphoserine is present on Ser-330.

Belongs to the OST-alpha family. In terms of assembly, interacts with SLC51B. The Ost-alpha/Ost-beta complex is a heterodimer composed of alpha (SLC51A) and beta (SLC51B) subunit.

It localises to the cell membrane. Its subcellular location is the endoplasmic reticulum membrane. The enzyme catalyses taurocholate(out) = taurocholate(in). The catalysed reaction is estrone 3-sulfate(out) = estrone 3-sulfate(in). It catalyses the reaction dehydroepiandrosterone 3-sulfate(out) = dehydroepiandrosterone 3-sulfate(in). It carries out the reaction tauroursodeoxycholate(out) = tauroursodeoxycholate(in). The enzyme catalyses glycoursodeoxycholate(out) = glycoursodeoxycholate(in). The catalysed reaction is glycocholate(out) = glycocholate(in). It catalyses the reaction taurochenodeoxycholate(out) = taurochenodeoxycholate(in). It carries out the reaction glycochenodeoxycholate(out) = glycochenodeoxycholate(in). The enzyme catalyses taurodeoxycholate(out) = taurodeoxycholate(in). The catalysed reaction is glycodeoxycholate(out) = glycodeoxycholate(in). It catalyses the reaction prostaglandin E2(out) = prostaglandin E2(in). In terms of biological role, essential component of the Ost-alpha/Ost-beta complex, a heterodimer that acts as the intestinal basolateral transporter responsible for bile acid export from enterocytes into portal blood. Efficiently transports the major species of bile acids (taurocholate). Taurine conjugates are transported more efficiently across the basolateral membrane than glycine-conjugated bile acids. Can also transport steroids such as estrone 3-sulfate and dehydroepiandrosterone 3-sulfate, therefore playing a role in the enterohepatic circulation of sterols. Able to transport eicosanoids such as prostaglandin E2. The sequence is that of Organic solute transporter subunit alpha (SLC51A) from Bos taurus (Bovine).